The sequence spans 302 residues: Phosphoribosylaminoimidazole-succinocarboxamide synthase (302 aa).

This sequence belongs to the SAICAR synthetase family.

It carries out the reaction 5-amino-1-(5-phospho-D-ribosyl)imidazole-4-carboxylate + L-aspartate + ATP = (2S)-2-[5-amino-1-(5-phospho-beta-D-ribosyl)imidazole-4-carboxamido]succinate + ADP + phosphate + 2 H(+). It participates in purine metabolism; IMP biosynthesis via de novo pathway; 5-amino-1-(5-phospho-D-ribosyl)imidazole-4-carboxamide from 5-amino-1-(5-phospho-D-ribosyl)imidazole-4-carboxylate: step 1/2. The sequence is that of Phosphoribosylaminoimidazole-succinocarboxamide synthase from Ralstonia nicotianae (strain ATCC BAA-1114 / GMI1000) (Ralstonia solanacearum).